A 569-amino-acid chain; its full sequence is Urease subunit alpha (569 aa).

The Urease domain occupies 132-569 (GGVDTHIHFI…VPLGQRYFLF (438 aa)). Ni(2+)-binding residues include histidine 137, histidine 139, and lysine 220. Residue lysine 220 is modified to N6-carboxylysine. A substrate-binding site is contributed by histidine 222. The Ni(2+) site is built by histidine 249 and histidine 275. Histidine 323 serves as the catalytic Proton donor. Aspartate 363 contacts Ni(2+).

It belongs to the metallo-dependent hydrolases superfamily. Urease alpha subunit family. In terms of assembly, heterotrimer of UreA (gamma), UreB (beta) and UreC (alpha) subunits. Three heterotrimers associate to form the active enzyme. It depends on Ni cation as a cofactor. In terms of processing, carboxylation allows a single lysine to coordinate two nickel ions.

It is found in the cytoplasm. It catalyses the reaction urea + 2 H2O + H(+) = hydrogencarbonate + 2 NH4(+). It participates in nitrogen metabolism; urea degradation; CO(2) and NH(3) from urea (urease route): step 1/1. In Bacillus subtilis (strain 168), this protein is Urease subunit alpha.